Here is a 217-residue protein sequence, read N- to C-terminus: 3-demethoxyubiquinol 3-hydroxylase (217 aa).

Residues Glu-66, Glu-96, His-99, Glu-148, Glu-180, and His-183 each coordinate Fe cation.

Belongs to the COQ7 family. Requires Fe cation as cofactor.

It is found in the cell membrane. It carries out the reaction a 5-methoxy-2-methyl-3-(all-trans-polyprenyl)benzene-1,4-diol + AH2 + O2 = a 3-demethylubiquinol + A + H2O. It participates in cofactor biosynthesis; ubiquinone biosynthesis. In terms of biological role, catalyzes the hydroxylation of 2-nonaprenyl-3-methyl-6-methoxy-1,4-benzoquinol during ubiquinone biosynthesis. The protein is 3-demethoxyubiquinol 3-hydroxylase of Xanthomonas euvesicatoria pv. vesicatoria (strain 85-10) (Xanthomonas campestris pv. vesicatoria).